A 658-amino-acid chain; its full sequence is Integrator complex subunit 9 (658 aa).

Positions 550–574 (KHVLQLPPKPPQPPTSKKRKRVSDD) are disordered. Residues 566 to 570 (KKRKR) carry the Nuclear localization signal motif.

This sequence belongs to the metallo-beta-lactamase superfamily. RNA-metabolizing metallo-beta-lactamase-like family. INTS9 subfamily. In terms of assembly, component of the Integrator complex, composed of core subunits INTS1, INTS2, INTS3, INTS4, INTS5, INTS6, INTS7, INTS8, INTS9/RC74, INTS10, INTS11/CPSF3L, INTS12, INTS13, INTS14 and INTS15. The core complex associates with protein phosphatase 2A subunits PPP2CA and PPP2R1A, to form the Integrator-PP2A (INTAC) complex. INTS9 is part of the RNA endonuclease subcomplex, composed of INTS4, INTS9, INTS11 and inositol hexakisphosphate (InsP6).

Its subcellular location is the nucleus. The protein localises to the cytoplasm. Its function is as follows. Component of the integrator complex, a multiprotein complex that terminates RNA polymerase II (Pol II) transcription in the promoter-proximal region of genes. The integrator complex provides a quality checkpoint during transcription elongation by driving premature transcription termination of transcripts that are unfavorably configured for transcriptional elongation: the complex terminates transcription by (1) catalyzing dephosphorylation of the C-terminal domain (CTD) of Pol II subunit POLR2A/RPB1 and SUPT5H/SPT5, (2) degrading the exiting nascent RNA transcript via endonuclease activity and (3) promoting the release of Pol II from bound DNA. The integrator complex is also involved in terminating the synthesis of non-coding Pol II transcripts, such as enhancer RNAs (eRNAs), small nuclear RNAs (snRNAs), telomerase RNAs and long non-coding RNAs (lncRNAs). This chain is Integrator complex subunit 9 (INTS9), found in Gallus gallus (Chicken).